The chain runs to 327 residues: Serine/threonine-protein phosphatase 4 regulatory subunit ppfr-4 (327 aa).

A coiled-coil region spans residues 141 to 185 (KLAVEEIRRLKLERHKKKQELKMAELRIQKQLEAVSIDEQNLREL). A disordered region spans residues 271–327 (KFGHNPQNAPQSSAPAGAEAQESEEEVDDDEARAKAMRWDEYKDDHRRGWGNMHNKG). Positions 275 to 284 (NPQNAPQSSA) are enriched in polar residues. Acidic residues predominate over residues 291 to 301 (QESEEEVDDDE). Positions 302–318 (ARAKAMRWDEYKDDHRR) are enriched in basic and acidic residues.

Serine/threonine-protein phosphatase 4 (PP4) occurs in different assemblies of the catalytic and one or more regulatory subunits. The catalytic subunit is likely to be pph-4.1.

Functionally, probable regulatory subunit of serine/threonine-protein phosphatase PP4 which may play a role in meiosis and embryonic mitosis. Probably in association with catalytic subunit pph-4.1, regulates microtubule severing during oocyte meiosis II by dephosphorylating and likely activating mei-1, a component of the katanin microtubule severing complex. The sequence is that of Serine/threonine-protein phosphatase 4 regulatory subunit ppfr-4 from Caenorhabditis elegans.